The sequence spans 457 residues: Putative hexose transporter 12 (457 aa).

At 1–2 the chain is on the cytoplasmic side; sequence MG. Residues 3 to 23 traverse the membrane as a helical segment; that stretch reads LIVSIFNIGCAIGGIVLSKVG. Residues 24 to 29 are Extracellular-facing; it reads DIYGRR. The helical transmembrane segment at 30 to 50 threads the bilayer; that stretch reads IGLITVTAIYVVGILIQITSI. The Cytoplasmic portion of the chain corresponds to 51–60; that stretch reads NKWYQYFIGR. Residues 61 to 81 form a helical membrane-spanning segment; sequence IISGIGVGGIAVLSPMLISEV. The Extracellular segment spans residues 82-87; sequence APKHIR. The chain crosses the membrane as a helical span at residues 88-108; the sequence is GTLVQLYQLMGTMGIFLGYCT. Residues 109–122 are Cytoplasmic-facing; that stretch reads NYGTKNYHNATQWR. The helical transmembrane segment at 123–143 threads the bilayer; the sequence is VGLGLCFAWATFMVSGMMFVP. At 144-247 the chain is on the extracellular side; the sequence is ESPRYLIEVG…KSVGLKDSFQ (104 aa). Asn194 is a glycosylation site (N-linked (GlcNAc...) asparagine). Residues 248–268 traverse the membrane as a helical segment; sequence TSIIIGVVNFFSSFIAVYTIE. Residues 269–274 are Cytoplasmic-facing; that stretch reads RFGRRT. The chain crosses the membrane as a helical span at residues 275–295; it reads CLLWGAASMLCCFAVFASVGV. The Extracellular segment spans residues 296 to 319; it reads TKLWPQGSSHQDITSQGAGNCMIV. A helical membrane pass occupies residues 320–340; sequence FTMFFIFSFATTWAGGCFVIV. At 341-353 the chain is on the cytoplasmic side; sequence SETFPLRAKSRGM. Residues 354-374 traverse the membrane as a helical segment; the sequence is AIATAANWMWGFLISFFTPFI. Residues 375–379 lie on the Extracellular side of the membrane; sequence TGAIN. A helical membrane pass occupies residues 380–400; it reads FYYGYVFLGCLVFAYFYVFFF. Over 401–457 the chain is Cytoplasmic; that stretch reads VPETKGLTLEEVNTMWLEGVPAWKSASWVPPERRTADYDADAIDHDNRPIYKRFFSS.

It belongs to the major facilitator superfamily. Sugar transporter (TC 2.A.1.1) family.

The protein localises to the membrane. Functionally, probable glucose transporter. The chain is Putative hexose transporter 12 (HXT12) from Saccharomyces cerevisiae (strain ATCC 204508 / S288c) (Baker's yeast).